Consider the following 676-residue polypeptide: UvrABC system protein C (676 aa).

In terms of domain architecture, GIY-YIG spans 16–95 (VEPGVYRFRD…IKEFDPRFNI (80 aa)). Positions 208–243 (DRLVRDLERKMTAAAEDLDFERAARLRDDIGALRRA) constitute a UVR domain.

The protein belongs to the UvrC family. In terms of assembly, interacts with UvrB in an incision complex.

It localises to the cytoplasm. Its function is as follows. The UvrABC repair system catalyzes the recognition and processing of DNA lesions. UvrC both incises the 5' and 3' sides of the lesion. The N-terminal half is responsible for the 3' incision and the C-terminal half is responsible for the 5' incision. The sequence is that of UvrABC system protein C from Mycobacterium sp. (strain JLS).